Reading from the N-terminus, the 215-residue chain is Small ribosomal subunit protein eS1 (215 aa).

This sequence belongs to the eukaryotic ribosomal protein eS1 family.

The sequence is that of Small ribosomal subunit protein eS1 from Thermoplasma volcanium (strain ATCC 51530 / DSM 4299 / JCM 9571 / NBRC 15438 / GSS1).